Here is a 704-residue protein sequence, read N- to C-terminus: Elongation factor G 1 (704 aa).

Positions 8–285 (EKIRNIGISA…AVCAFLPNPK (278 aa)) constitute a tr-type G domain. GTP contacts are provided by residues 17–24 (AHIDSGKT), 84–88 (DTPGH), and 138–141 (NKMD).

The protein belongs to the TRAFAC class translation factor GTPase superfamily. Classic translation factor GTPase family. EF-G/EF-2 subfamily.

The protein localises to the cytoplasm. Its function is as follows. Catalyzes the GTP-dependent ribosomal translocation step during translation elongation. During this step, the ribosome changes from the pre-translocational (PRE) to the post-translocational (POST) state as the newly formed A-site-bound peptidyl-tRNA and P-site-bound deacylated tRNA move to the P and E sites, respectively. Catalyzes the coordinated movement of the two tRNA molecules, the mRNA and conformational changes in the ribosome. The chain is Elongation factor G 1 from Myxococcus xanthus (strain DK1622).